The following is a 139-amino-acid chain: Protein FAM216B (139 aa).

It belongs to the FAM216 family.

This is Protein FAM216B (FAM216B) from Homo sapiens (Human).